A 95-amino-acid chain; its full sequence is Aspartyl/glutamyl-tRNA(Asn/Gln) amidotransferase subunit C (95 aa).

This sequence belongs to the GatC family. Heterotrimer of A, B and C subunits.

The catalysed reaction is L-glutamyl-tRNA(Gln) + L-glutamine + ATP + H2O = L-glutaminyl-tRNA(Gln) + L-glutamate + ADP + phosphate + H(+). It carries out the reaction L-aspartyl-tRNA(Asn) + L-glutamine + ATP + H2O = L-asparaginyl-tRNA(Asn) + L-glutamate + ADP + phosphate + 2 H(+). In terms of biological role, allows the formation of correctly charged Asn-tRNA(Asn) or Gln-tRNA(Gln) through the transamidation of misacylated Asp-tRNA(Asn) or Glu-tRNA(Gln) in organisms which lack either or both of asparaginyl-tRNA or glutaminyl-tRNA synthetases. The reaction takes place in the presence of glutamine and ATP through an activated phospho-Asp-tRNA(Asn) or phospho-Glu-tRNA(Gln). The chain is Aspartyl/glutamyl-tRNA(Asn/Gln) amidotransferase subunit C from Thermodesulfovibrio yellowstonii (strain ATCC 51303 / DSM 11347 / YP87).